We begin with the raw amino-acid sequence, 78 residues long: MVKTITISDDVYNELLRIKGNKSFSEVLRELLKERKGNKEVLKRIFGILSEEEYQEVKKRLKELEGEFEKWEQSLTQM.

The protein belongs to the UPF0330 family.

Functionally, possibly the antitoxin component of a type II toxin-antitoxin (TA) system. This Pyrococcus furiosus (strain ATCC 43587 / DSM 3638 / JCM 8422 / Vc1) protein is Putative antitoxin PF1222.